An 800-amino-acid chain; its full sequence is MSRRRAHDTEDESYDHRRNKRRRVSENQEIEDRLESLILRVGERSTSSVESNLEGLVSVLEADLGTFRLKILRILSDCAVRMPEKCTVYTTLVGLLNAKNYKFGGEFVDHMVKTFKESLKMCRWDAARYSLRFLADLVNCHVISATSLLQLLDTMIDVSNEDTVPQVRRDWFVFAVLSTLPWVGRDLYEKKESALESLLLRIEVYLNKRSKKHHNALRVWSSDAPHPQEEYLDCLWAQIRKLRQDNWAEKHIPRPYLVFDSILCEALQHNLPAIVPPPHHDNFEYPMPWVVYRMFDYTDCPDGPNLPGAHSIERFLIEEHLHHIIETYHHERKDCAAQLLSFPFKHKIPLEYCIVEVIFAELFHMPTPRYLDICYGSILIELCKLQPATLPQVLAQATEILFMRIDSMNTSCFDRFVNWFSYHLSNFKFTWSWDEWDSCLLLDGEHPRPKFIQEVLQKCLRLSYHQRITEMMPTTYAKLIPLTPVPNYKYANEEAANLPGTAVAHQLVVAIRQKCTPEEVVTILKDIPSSGYSGEEMSDGSFNALKIDVFVQTLLNLGSKSFSHSFAAISKFHSVFRALAETEEAQICILHNIYELWSSHQQMMVVLIDKLLKLQIVDCSAVATWIFSKEMTGEFTKMYLWEILHLTIKKMNKHVIKLNSELSEAKDKLAKADSSSSDSEDDSSHKRKKPITHADKPSEEVVERMEEKLEAANVNQKRLFLIVFQRFIMILSEHLLRSDTDGRDPDTDWYRWTIGRLQQVFLMHHEQVQKYSSTLETLLFTSDLDTHILEVFQQFVALRA.

The tract at residues 1–26 (MSRRRAHDTEDESYDHRRNKRRRVSE) is disordered. Residue threonine 9 is modified to Phosphothreonine. Positions 31–243 (EDRLESLILR…CLWAQIRKLR (213 aa)) constitute an MIF4G domain. The segment at 669–700 (LAKADSSSSDSEDDSSHKRKKPITHADKPSEE) is disordered.

This sequence belongs to the NCBP1 family. Component of the nuclear cap-binding complex (CBC), a heterodimer composed of Cbp80 and Cbp20 that interacts with m7GpppG-capped RNA.

Its subcellular location is the nucleus. Its function is as follows. Component of the cap-binding complex (CBC), which binds cotranscriptionally to the 5'-cap of pre-mRNAs and is involved in various processes such as pre-mRNA splicing and RNA-mediated gene silencing (RNAi). The CBC complex is involved in miRNA-mediated RNA interference via its interaction with Ars2 and is required for primary microRNAs (miRNAs) processing. Also involved in innate immunity via the short interfering RNAs (siRNAs) processing machinery by restricting the viral RNA production. In the CBC complex, Cbp80 does not bind directly capped RNAs (m7GpppG-capped RNA) but is required to stabilize the movement of the N-terminal loop of Cbp20 and lock the CBC into a high affinity cap-binding state with the cap structure. The sequence is that of Nuclear cap-binding protein subunit 1 (Cbp80) from Drosophila erecta (Fruit fly).